The primary structure comprises 71 residues: Movement protein TGBp3 (71 aa).

Topologically, residues 1-3 (MEA) are lumenal. The chain crosses the membrane as a helical span at residues 4 to 26 (GAYLNAIIFVLVATIIAVISVGL). Residues 27–71 (TQTEPCTIRITGESITVHACHLDSETIKALATLKPLSLERLSFHQ) lie on the Cytoplasmic side of the membrane.

The protein belongs to the Tymovirales TGBp3 protein family.

Its subcellular location is the host endoplasmic reticulum membrane. Plays a role in viral cell-to-cell propagation, by facilitating genome transport to neighboring plant cells through plasmosdesmata. May induce the formation of granular vesicles derived from the Endoplasmic reticulum, which align on actin filaments. The polypeptide is Movement protein TGBp3 (Brassica campestris (Field mustard)).